The sequence spans 244 residues: Transcriptional activator protein anr (244 aa).

Residue 21 to 149 participates in a nucleoside 3',5'-cyclic phosphate binding; that stretch reads APLCLPLSLT…RLMSREIRDD (129 aa). The HTH crp-type domain maps to 159–232; the sequence is KTADERIATF…GKEVHILDSI (74 aa). The segment at residues 192–211 is a DNA-binding region (H-T-H motif); that stretch reads RNEIGNYLGLAVETVSRVFT.

Its function is as follows. Transcriptional activator of anaerobic gene expression. The sequence is that of Transcriptional activator protein anr (anr) from Pseudomonas aeruginosa (strain ATCC 15692 / DSM 22644 / CIP 104116 / JCM 14847 / LMG 12228 / 1C / PRS 101 / PAO1).